The following is a 347-amino-acid chain: Dual specificity mitogen-activated protein kinase kinase 3 (347 aa).

The residue at position 1 (Met1) is an N-acetylmethionine. The span at 1 to 11 (MESPAASPPAS) shows a compositional bias: pro residues. Residues 1–45 (MESPAASPPASLPQTKGKSKRKKDLRISCVSKPPVSNPTPPRNLD) form a disordered region. Ser3 bears the Phosphoserine mark. Residues 64–325 (LVTISELGRG…YLELMEHPFF (262 aa)) enclose the Protein kinase domain. Residues 70–78 (LGRGAYGVV) and Lys93 contribute to the ATP site. Residue Asp190 is the Proton acceptor of the active site. Ser218 carries the phosphoserine modification. Thr222 carries the phosphothreonine modification.

It belongs to the protein kinase superfamily. STE Ser/Thr protein kinase family. MAP kinase kinase subfamily. Component of a signaling complex containing at least AKAP13, PKN1, MAPK14, ZAK and MAP2K3. Within this complex, AKAP13 interacts directly with PKN1, which in turn recruits MAPK14, MAP2K3 and ZAK. Binds to DYRK1B/MIRK and increases its kinase activity. Part of a complex with MAP3K3, RAC1 and CCM2. Interacts with ARRB1. Post-translationally, autophosphorylated. Phosphorylation on Ser-218 and Thr-222 by MAP kinase kinase kinases positively regulates the kinase activity. Phosphorylated by TAOK2.

The enzyme catalyses L-seryl-[protein] + ATP = O-phospho-L-seryl-[protein] + ADP + H(+). The catalysed reaction is L-threonyl-[protein] + ATP = O-phospho-L-threonyl-[protein] + ADP + H(+). It carries out the reaction L-tyrosyl-[protein] + ATP = O-phospho-L-tyrosyl-[protein] + ADP + H(+). Activated by dual phosphorylation on Ser-218 and Thr-222. Dual specificity kinase. Is activated by cytokines and environmental stress in vivo. Catalyzes the concomitant phosphorylation of a threonine and a tyrosine residue in the MAP kinase p38. Part of a signaling cascade that begins with the activation of the adrenergic receptor ADRA1B and leads to the activation of MAPK14. In Mus musculus (Mouse), this protein is Dual specificity mitogen-activated protein kinase kinase 3 (Map2k3).